The sequence spans 1549 residues: Ferredoxin-dependent glutamate synthase (1549 aa).

Residue Cys-37 is the For GATase activity of the active site. Positions Cys-37–Gln-435 constitute a Glutamine amidotransferase type-2 domain. FMN is bound at residue Leu-1116–Arg-1173. 3 residues coordinate [3Fe-4S] cluster: Cys-1169, Cys-1175, and Cys-1180.

It belongs to the glutamate synthase family. In terms of assembly, monomer. It depends on [3Fe-4S] cluster as a cofactor. Requires FAD as cofactor. The cofactor is FMN.

The protein localises to the plastid. Its subcellular location is the chloroplast stroma. It catalyses the reaction 2 oxidized [2Fe-2S]-[ferredoxin] + 2 L-glutamate = L-glutamine + 2 reduced [2Fe-2S]-[ferredoxin] + 2-oxoglutarate + 2 H(+). It participates in amino-acid biosynthesis; L-glutamate biosynthesis via GLT pathway; L-glutamate from 2-oxoglutarate and L-glutamine (ferredoxin route): step 1/1. It functions in the pathway energy metabolism; nitrogen metabolism. The chain is Ferredoxin-dependent glutamate synthase (gltB) from Cyanidium caldarium (Red alga).